The sequence spans 345 residues: Protein arginine N-methyltransferase 1 (345 aa).

The region spanning 24-345 (ADYYFDSYSH…VKNTQQYRMR (322 aa)) is the SAM-dependent MTase PRMT-type domain. S-adenosyl-L-methionine is bound by residues histidine 37, arginine 46, glycine 70, glutamate 92, and glutamate 121. Catalysis depends on residues glutamate 136 and glutamate 145.

This sequence belongs to the class I-like SAM-binding methyltransferase superfamily. Protein arginine N-methyltransferase family. Post-translationally, phosphorylated during flagellum resorption.

The protein resides in the nucleus. Its subcellular location is the cell projection. It is found in the cilium. It localises to the flagellum. The catalysed reaction is L-arginyl-[protein] + S-adenosyl-L-methionine = N(omega)-methyl-L-arginyl-[protein] + S-adenosyl-L-homocysteine + H(+). It catalyses the reaction L-arginyl-[protein] + 2 S-adenosyl-L-methionine = N(omega),N(omega)-dimethyl-L-arginyl-[protein] + 2 S-adenosyl-L-homocysteine + 2 H(+). Its function is as follows. Arginine methyltransferase that methylates (mono and asymmetric dimethylation) the guanidino nitrogens of arginyl residues present in target proteins. Mediates asymmetric dimethylation of components of the axoneme during flagellum resorption, such as CCDC40/FAP172, CCDC65/FAP250, RSP1, RSP2, RPS5, RSP6, and tektin. This Chlamydomonas reinhardtii (Chlamydomonas smithii) protein is Protein arginine N-methyltransferase 1 (PRMT1).